The chain runs to 45 residues: Photosystem II reaction center protein K (45 aa).

A propeptide spanning residues 1–8 (MEGILFLA) is cleaved from the precursor. The chain crosses the membrane as a helical span at residues 24–44 (APVIPVFFLLLAFVWQAAVGF).

It belongs to the PsbK family. In terms of assembly, PSII is composed of 1 copy each of membrane proteins PsbA, PsbB, PsbC, PsbD, PsbE, PsbF, PsbH, PsbI, PsbJ, PsbK, PsbL, PsbM, PsbT, PsbX, PsbY, PsbZ, Psb30/Ycf12, at least 3 peripheral proteins of the oxygen-evolving complex and a large number of cofactors. It forms dimeric complexes.

It localises to the plastid. Its subcellular location is the chloroplast thylakoid membrane. Functionally, one of the components of the core complex of photosystem II (PSII). PSII is a light-driven water:plastoquinone oxidoreductase that uses light energy to abstract electrons from H(2)O, generating O(2) and a proton gradient subsequently used for ATP formation. It consists of a core antenna complex that captures photons, and an electron transfer chain that converts photonic excitation into a charge separation. The sequence is that of Photosystem II reaction center protein K from Guillardia theta (Cryptophyte).